A 436-amino-acid polypeptide reads, in one-letter code: Xylose isomerase (436 aa).

Catalysis depends on residues His100 and Asp103. Mg(2+)-binding residues include Glu231, Glu267, His270, Asp295, Asp306, Asp308, and Asp338.

The protein belongs to the xylose isomerase family. In terms of assembly, homotetramer. Requires Mg(2+) as cofactor.

It localises to the cytoplasm. It carries out the reaction alpha-D-xylose = alpha-D-xylulofuranose. The protein is Xylose isomerase of Chelativorans sp. (strain BNC1).